The chain runs to 130 residues: Small ribosomal subunit protein uS8 (130 aa).

Belongs to the universal ribosomal protein uS8 family.

It localises to the cytoplasm. The sequence is that of Small ribosomal subunit protein uS8 (RPS15A) from Daucus carota (Wild carrot).